The primary structure comprises 962 residues: Insulin-degrading enzyme homolog (962 aa).

The span at 1–10 shows a compositional bias: low complexity; sequence MVANEQQQQQ. The tract at residues 1 to 21 is disordered; sequence MVANEQQQQQQEEERKEVKLI. Histidine 74 serves as a coordination point for Zn(2+). Glutamate 77 functions as the Proton acceptor in the catalytic mechanism. The Zn(2+) site is built by histidine 78 and glutamate 155.

This sequence belongs to the peptidase M16 family. Homodimer. Zn(2+) is required as a cofactor.

The protein localises to the cytoplasm. This is Insulin-degrading enzyme homolog from Dictyostelium discoideum (Social amoeba).